The primary structure comprises 134 residues: Ribosome-binding factor A (134 aa).

It belongs to the RbfA family. As to quaternary structure, monomer. Binds 30S ribosomal subunits, but not 50S ribosomal subunits or 70S ribosomes.

The protein resides in the cytoplasm. One of several proteins that assist in the late maturation steps of the functional core of the 30S ribosomal subunit. Associates with free 30S ribosomal subunits (but not with 30S subunits that are part of 70S ribosomes or polysomes). Required for efficient processing of 16S rRNA. May interact with the 5'-terminal helix region of 16S rRNA. The polypeptide is Ribosome-binding factor A (Parasynechococcus marenigrum (strain WH8102)).